We begin with the raw amino-acid sequence, 462 residues long: Trigger factor (462 aa).

One can recognise a PPIase FKBP-type domain in the interval 161–246 (GDVVVIDFVG…VKEVRAPKAA (86 aa)). Residues 428–437 (SVEDLRKDPD) are compositionally biased toward basic and acidic residues. The disordered stretch occupies residues 428 to 462 (SVEDLRKDPDEASADGEAAPAKPKKKAAAKKKAAE). Over residues 449 to 462 (KPKKKAAAKKKAAE) the composition is skewed to basic residues.

The protein belongs to the FKBP-type PPIase family. Tig subfamily.

The protein localises to the cytoplasm. It catalyses the reaction [protein]-peptidylproline (omega=180) = [protein]-peptidylproline (omega=0). Functionally, involved in protein export. Acts as a chaperone by maintaining the newly synthesized protein in an open conformation. Functions as a peptidyl-prolyl cis-trans isomerase. The polypeptide is Trigger factor (Paramagnetospirillum magneticum (strain ATCC 700264 / AMB-1) (Magnetospirillum magneticum)).